Consider the following 482-residue polypeptide: 2-succinylbenzoate--CoA ligase (482 aa).

This sequence belongs to the ATP-dependent AMP-binding enzyme family. MenE subfamily.

The catalysed reaction is 2-succinylbenzoate + ATP + CoA = 2-succinylbenzoyl-CoA + AMP + diphosphate. It participates in quinol/quinone metabolism; 1,4-dihydroxy-2-naphthoate biosynthesis; 1,4-dihydroxy-2-naphthoate from chorismate: step 5/7. It functions in the pathway quinol/quinone metabolism; menaquinone biosynthesis. Converts 2-succinylbenzoate (OSB) to 2-succinylbenzoyl-CoA (OSB-CoA). The polypeptide is 2-succinylbenzoate--CoA ligase (Bacillus cereus (strain ZK / E33L)).